Consider the following 247-residue polypeptide: Uracil-DNA glycosylase (247 aa).

Catalysis depends on aspartate 83, which acts as the Proton acceptor.

Belongs to the uracil-DNA glycosylase (UDG) superfamily. UNG family.

The protein resides in the cytoplasm. It carries out the reaction Hydrolyzes single-stranded DNA or mismatched double-stranded DNA and polynucleotides, releasing free uracil.. Functionally, excises uracil residues from the DNA which can arise as a result of misincorporation of dUMP residues by DNA polymerase or due to deamination of cytosine. In Deinococcus radiodurans (strain ATCC 13939 / DSM 20539 / JCM 16871 / CCUG 27074 / LMG 4051 / NBRC 15346 / NCIMB 9279 / VKM B-1422 / R1), this protein is Uracil-DNA glycosylase.